Consider the following 92-residue polypeptide: NELL2-interacting cell ontogeny regulator 1 (92 aa).

The first 30 residues, Met1–Ala30, serve as a signal peptide directing secretion.

The protein belongs to the NICOL family.

It is found in the secreted. It localises to the cytoplasm. The protein resides in the perinuclear region. Its function is as follows. mRNA-binding protein which interacts with a range of target mRNAs and may promote extracellular matrix production. May function as a component of lumicrine signaling and may play a crucial role in epididymal-mediated sperm maturation and male fertility. The protein is NELL2-interacting cell ontogeny regulator 1 of Gallus gallus (Chicken).